The sequence spans 411 residues: MKKYLVGGAVRDSLLNLPITEKDWVITGSSAQEMLSIGYEQVGKDFPVFLHPKSHEEYALARTERKLGSGYTGFICHTEPSITIEEDLYRRDLTINAMAYDMNGNLLDPYNGQKDIQLRLLRHVSNAFYEDPLRVLRVARFAAKLKNIGFTIAIETFEIMTHMIHELKSLSPERVWMETKKALITDNPQVYFQVLKKCGALKILFPELDILFTIPQCTTHHSNLMNLGNQTMTRLSNISCLSNDLAIRYAILCCNLGSEMNPRKQPLKQLTQKKPQISIINNLCNRLKVPNNILKLTKIVFMYYHDLYDVTKLSSEMIMTIFQAFDCWRTPTRIELIIKINQSQLLGSKFHINYLFFQSTLLRTAFNETTQIKANDIINSGFSGINISQELYSRRLHVLKHWKNKFLTHKQ.

ATP-binding residues include Gly8 and Arg11. Residues Gly8 and Arg11 each contribute to the CTP site. Positions 21 and 23 each coordinate Mg(2+). Arg91, Arg137, and Arg140 together coordinate ATP. CTP is bound by residues Arg91, Arg137, and Arg140. One can recognise an HD domain in the interval Leu227–Trp328.

Belongs to the tRNA nucleotidyltransferase/poly(A) polymerase family. Bacterial CCA-adding enzyme type 2 subfamily. Requires Mg(2+) as cofactor.

The catalysed reaction is a tRNA precursor + 2 CTP + ATP = a tRNA with a 3' CCA end + 3 diphosphate. The enzyme catalyses a tRNA with a 3' CCA end + 2 CTP + ATP = a tRNA with a 3' CCACCA end + 3 diphosphate. In terms of biological role, catalyzes the addition and repair of the essential 3'-terminal CCA sequence in tRNAs without using a nucleic acid template. Adds these three nucleotides in the order of C, C, and A to the tRNA nucleotide-73, using CTP and ATP as substrates and producing inorganic pyrophosphate. tRNA 3'-terminal CCA addition is required both for tRNA processing and repair. Also involved in tRNA surveillance by mediating tandem CCA addition to generate a CCACCA at the 3' terminus of unstable tRNAs. While stable tRNAs receive only 3'-terminal CCA, unstable tRNAs are marked with CCACCA and rapidly degraded. The polypeptide is CCA-adding enzyme (Blochmanniella floridana).